Here is a 218-residue protein sequence, read N- to C-terminus: Regulator of G-protein signaling 20 (218 aa).

The span at 1-10 shows a compositional bias: basic and acidic residues; the sequence is MGSERTEMRK. Residues 1–26 form a disordered region; that stretch reads MGSERTEMRKRQMAATQETPGTAQAQ. A compositionally biased stretch (polar residues) spans 14–26; that stretch reads AATQETPGTAQAQ. Residues 92–208 form the RGS domain; the sequence is SFDKLMLTPA…MNSAIYKDLL (117 aa).

In terms of assembly, forms a complex with G(alpha)z/i2 subunits and mu-opioid receptors; the formation of this complex results in mu-opioid receptor desensitization. Interacts with OPRM1. Fatty acylated. Heavily palmitoylated in the cysteine string motif. In terms of processing, N- and O-glycosylated in synapsomal membranes. Post-translationally, sumoylated by SUMO1 and SUM02 in synaptosomes. The sumoylated forms act as a scaffold for sequestering mu-opioid receptor-activated G(alpha) subunits.

Its subcellular location is the membrane. The protein localises to the nucleus. The protein resides in the cytoplasm. Its function is as follows. Inhibits signal transduction by increasing the GTPase activity of G protein alpha subunits thereby driving them into their inactive GDP-bound form. Binds selectively to G(z)-alpha and G(alpha)-i2 subunits, accelerates their GTPase activity and regulates their signaling activities. The G(z)-alpha activity is inhibited by the phosphorylation and palmitoylation of the G-protein. Negatively regulates mu-opioid receptor-mediated activation of the G-proteins. The protein is Regulator of G-protein signaling 20 (RGS20) of Gallus gallus (Chicken).